The following is a 252-amino-acid chain: Imidazole glycerol phosphate synthase subunit HisF (252 aa).

Active-site residues include aspartate 11 and aspartate 130.

It belongs to the HisA/HisF family. As to quaternary structure, heterodimer of HisH and HisF.

The protein resides in the cytoplasm. The catalysed reaction is 5-[(5-phospho-1-deoxy-D-ribulos-1-ylimino)methylamino]-1-(5-phospho-beta-D-ribosyl)imidazole-4-carboxamide + L-glutamine = D-erythro-1-(imidazol-4-yl)glycerol 3-phosphate + 5-amino-1-(5-phospho-beta-D-ribosyl)imidazole-4-carboxamide + L-glutamate + H(+). The protein operates within amino-acid biosynthesis; L-histidine biosynthesis; L-histidine from 5-phospho-alpha-D-ribose 1-diphosphate: step 5/9. IGPS catalyzes the conversion of PRFAR and glutamine to IGP, AICAR and glutamate. The HisF subunit catalyzes the cyclization activity that produces IGP and AICAR from PRFAR using the ammonia provided by the HisH subunit. The chain is Imidazole glycerol phosphate synthase subunit HisF from Desulforudis audaxviator (strain MP104C).